A 292-amino-acid chain; its full sequence is Protein sarah (292 aa).

The span at 1-51 shows a compositional bias: low complexity; sequence MSDAAKSNNNASADAPDPTTPDATGEADAANAATPTTPRGNHNNNNSANGR. Residues 1–111 are disordered; that stretch reads MSDAAKSNNN…TEPEVDADSF (111 aa). 3 positions are modified to phosphoserine: Ser-67, Ser-72, and Ser-100. Residues 98–111 show a composition bias toward acidic residues; it reads VDSDTEPEVDADSF. Thr-102 and Thr-196 each carry phosphothreonine. A phosphoserine mark is found at Ser-215 and Ser-219. Position 246 is a phosphothreonine (Thr-246).

It belongs to the RCAN family. Interacts with Pp2B-14D, CanA-14F and CanB2. Post-translationally, phosphorylation at Ser-215 and Ser-219 is essential for calcineurin activation and completion of female meiosis. Sgg is required for phosphorylation of Ser-215 in activated eggs. Ser-100, Thr-102 and Ser-219 are highly phosphorylated in both ovaries and activated eggs; however, phosphorylation at Ser-100 or Thr-102 is not required for sra function in completion of female meiosis. In terms of tissue distribution, expressed in central nervous system of the third instar larvae, with a relatively intense signal in the brain and weak signals in the ventral ganglion. Relatively low, but ubiquitous expression level is observed in leg and wing imaginal disks, no signal is detected in the eye-antennal disks. Expressed in all neurons in the adult brain.

In terms of biological role, required for elongation of meiosis I spindle. Critical for ovulation, meiotic progression in oocytes and female courtship behavior, including their postmating changes. Regulates female meiosis by controlling calcineurin activity in the germline. Has a role in calcium signaling during egg activation; bcd mRNA polyadenylation and translation in the oocyte. The chain is Protein sarah (sra) from Drosophila melanogaster (Fruit fly).